A 281-amino-acid polypeptide reads, in one-letter code: Pantothenate synthetase (281 aa).

30-37 is an ATP binding site; the sequence is MGNLHQGH. His37 serves as the catalytic Proton donor. Gln61 contacts (R)-pantoate. Gln61 contributes to the beta-alanine binding site. 149-152 serves as a coordination point for ATP; the sequence is GNKD. Residue Gln155 participates in (R)-pantoate binding. Residues Ile178 and 186–189 contribute to the ATP site; that span reads MSSR.

Belongs to the pantothenate synthetase family. In terms of assembly, homodimer.

Its subcellular location is the cytoplasm. It carries out the reaction (R)-pantoate + beta-alanine + ATP = (R)-pantothenate + AMP + diphosphate + H(+). The protein operates within cofactor biosynthesis; (R)-pantothenate biosynthesis; (R)-pantothenate from (R)-pantoate and beta-alanine: step 1/1. Its function is as follows. Catalyzes the condensation of pantoate with beta-alanine in an ATP-dependent reaction via a pantoyl-adenylate intermediate. In Shewanella baltica (strain OS223), this protein is Pantothenate synthetase.